A 339-amino-acid polypeptide reads, in one-letter code: Deubiquitinase and deneddylase Dub2 (339 aa).

A helical transmembrane segment spans residues 36–56 (IIIALFLIVISCGLILCAYTF). Catalysis depends on residues H203, D220, and C282.

Belongs to the peptidase C48 family.

The protein localises to the secreted. Its subcellular location is the host cell. It is found in the membrane. Effector proteins function to alter host cell physiology and promote bacterial survival in host tissues. This protease possesses deubiquitinating and deneddylating activities. This is Deubiquitinase and deneddylase Dub2 (cdu2) from Chlamydia trachomatis serovar A (strain ATCC VR-571B / DSM 19440 / HAR-13).